A 253-amino-acid polypeptide reads, in one-letter code: 2-succinyl-6-hydroxy-2,4-cyclohexadiene-1-carboxylate synthase (253 aa).

The AB hydrolase-1 domain occupies 11 to 147 (PWLVCLHGLF…PEALQDWYQQ (137 aa)).

Belongs to the AB hydrolase superfamily. MenH family. As to quaternary structure, monomer.

The enzyme catalyses 5-enolpyruvoyl-6-hydroxy-2-succinyl-cyclohex-3-ene-1-carboxylate = (1R,6R)-6-hydroxy-2-succinyl-cyclohexa-2,4-diene-1-carboxylate + pyruvate. The protein operates within quinol/quinone metabolism; 1,4-dihydroxy-2-naphthoate biosynthesis; 1,4-dihydroxy-2-naphthoate from chorismate: step 3/7. Its pathway is quinol/quinone metabolism; menaquinone biosynthesis. Its function is as follows. Catalyzes a proton abstraction reaction that results in 2,5-elimination of pyruvate from 2-succinyl-5-enolpyruvyl-6-hydroxy-3-cyclohexene-1-carboxylate (SEPHCHC) and the formation of 2-succinyl-6-hydroxy-2,4-cyclohexadiene-1-carboxylate (SHCHC). The protein is 2-succinyl-6-hydroxy-2,4-cyclohexadiene-1-carboxylate synthase of Pectobacterium atrosepticum (strain SCRI 1043 / ATCC BAA-672) (Erwinia carotovora subsp. atroseptica).